Reading from the N-terminus, the 416-residue chain is tRNA(Met) cytidine acetate ligase (416 aa).

ATP is bound by residues 7-20 (VAEY…HLYL), Gly102, Asn166, and Arg191.

Belongs to the TmcAL family.

It is found in the cytoplasm. It carries out the reaction cytidine(34) in elongator tRNA(Met) + acetate + ATP = N(4)-acetylcytidine(34) in elongator tRNA(Met) + AMP + diphosphate. In terms of biological role, catalyzes the formation of N(4)-acetylcytidine (ac(4)C) at the wobble position of elongator tRNA(Met), using acetate and ATP as substrates. First activates an acetate ion to form acetyladenylate (Ac-AMP) and then transfers the acetyl group to tRNA to form ac(4)C34. This is tRNA(Met) cytidine acetate ligase from Syntrophomonas wolfei subsp. wolfei (strain DSM 2245B / Goettingen).